The primary structure comprises 350 residues: Phosphotriesterase-related protein (350 aa).

Residues H22, H24, E169, H201, H230, and D298 each contribute to the a divalent metal cation site.

This sequence belongs to the metallo-dependent hydrolases superfamily. Phosphotriesterase family. Requires a divalent metal cation as cofactor.

The chain is Phosphotriesterase-related protein from Drosophila ananassae (Fruit fly).